The chain runs to 417 residues: Phosphoribosylamine--glycine ligase (417 aa).

Residues Lys-107–Glu-313 form the ATP-grasp domain. Leu-133–Ser-194 contacts ATP. Glu-283 and Asn-285 together coordinate Mg(2+).

The protein belongs to the GARS family. The cofactor is Mg(2+). It depends on Mn(2+) as a cofactor.

The catalysed reaction is 5-phospho-beta-D-ribosylamine + glycine + ATP = N(1)-(5-phospho-beta-D-ribosyl)glycinamide + ADP + phosphate + H(+). It participates in purine metabolism; IMP biosynthesis via de novo pathway; N(1)-(5-phospho-D-ribosyl)glycinamide from 5-phospho-alpha-D-ribose 1-diphosphate: step 2/2. The protein is Phosphoribosylamine--glycine ligase of Caldanaerobacter subterraneus subsp. tengcongensis (strain DSM 15242 / JCM 11007 / NBRC 100824 / MB4) (Thermoanaerobacter tengcongensis).